A 541-amino-acid polypeptide reads, in one-letter code: Membrane protein insertase YidC (541 aa).

6 helical membrane-spanning segments follow: residues 6 to 26 (NILL…WQAD), 325 to 345 (LVVD…LLMF), 349 to 369 (FVGN…GLLF), 420 to 440 (GGCL…WVLL), 457 to 477 (LSVQ…MFVM), and 500 to 520 (VIFT…WLVG).

It belongs to the OXA1/ALB3/YidC family. Type 1 subfamily. As to quaternary structure, interacts with the Sec translocase complex via SecD. Specifically interacts with transmembrane segments of nascent integral membrane proteins during membrane integration.

The protein localises to the cell inner membrane. Functionally, required for the insertion and/or proper folding and/or complex formation of integral membrane proteins into the membrane. Involved in integration of membrane proteins that insert both dependently and independently of the Sec translocase complex, as well as at least some lipoproteins. Aids folding of multispanning membrane proteins. The sequence is that of Membrane protein insertase YidC from Shewanella baltica (strain OS223).